The sequence spans 339 residues: uncharacterized protein (339 aa).

An N-terminal signal peptide occupies residues 1–29; that stretch reads MIKQVCKNITICSLALSTALTVFPASSYA.

Belongs to the aerolysin family.

This is an uncharacterized protein from Staphylococcus aureus (strain MRSA252).